We begin with the raw amino-acid sequence, 999 residues long: Embryonic polarity protein dorsal (999 aa).

The tract at residues 1-44 is disordered; it reads MFPNQNNGAAPGQGPAVDGQQSLNYNGLPAQQQQQLAQSTKNVR. One can recognise an RHD domain in the interval 47–342; the sequence is PYVKITEQPA…TFWNLHRHLK (296 aa). S312 bears the Phosphoserine; by PKA mark. Disordered stretches follow at residues 389–424 and 670–851; these read FNHE…EQYT and QARK…SVSG. Over residues 402-424 the composition is skewed to low complexity; sequence EQEQSVQQEQYTQEQSLQQEQYT. Positions 668 to 677 match the Nuclear export signal motif; that stretch reads NSQARKPETP. Residues 677 to 686 show a composition bias toward pro residues; it reads PMRPVPPVPP. Positions 710–719 are enriched in basic and acidic residues; it reads KQDSNAENRS. The span at 720-734 shows a compositional bias: polar residues; it reads IEANTVQTKPSTGES. The Nuclear localization signal motif lies at 756–773; it reads KKPGFFSKLFSRRKSKPD. Low complexity-rich tracts occupy residues 819 to 829 and 836 to 851; these read SNPAPAKSSPV and SKLT…SVSG.

As to quaternary structure, interacts with tamo via the nuclear localization signal. Interacts with emb, a component of the nuclear export complex. In terms of tissue distribution, in unchallenged larvae, expression of both isoforms is seen in fat body and gut (isoform A is more abundant). After immune challenge levels of both isoforms are enhanced.

It is found in the cytoplasm. The protein resides in the nucleus. In terms of biological role, embryonic developmental transcription factor. The lateral or ventral identity of a cell depends upon the concentration of this protein in its nucleus during the blastoderm stage. Acts as a morphogenetic transcription factor that specifically binds to the kappa-B-related consensus sequence 5'-GRGAAAANCC-3', located in the enhancer region of zygotic genes such as Zen, Twist, Snail and Decapentaplegic, promoting their expression. Part of a signaling pathway involving NF-kappa-B and Toll-related receptors, that functions in the apoptosis of unfit cells during cell competition. Mediates an immune response in larvae. May be part of a NF-kappa-B and Tollo signaling cascade that regulates development of the peripheral nervous system. This chain is Embryonic polarity protein dorsal (dl), found in Drosophila melanogaster (Fruit fly).